A 773-amino-acid chain; its full sequence is Beta-D-xylosidase 3 (773 aa).

The N-terminal stretch at 1-23 is a signal peptide; the sequence is MASRNRALFSVSTLFLCFIVCIS. Asn131 carries an N-linked (GlcNAc...) asparagine glycan. The active site involves Asp298. 3 N-linked (GlcNAc...) asparagine glycosylation sites follow: Asn349, Asn432, and Asn770.

This sequence belongs to the glycosyl hydrolase 3 family. In terms of tissue distribution, expressed in flowers and siliques, in the early stage of seed formation and not at seed maturation. Detected exclusively in the endosperm of very young seeds when the embryo is at the globular stage.

It is found in the secreted. The protein resides in the extracellular space. Its subcellular location is the extracellular matrix. It carries out the reaction Hydrolysis of terminal non-reducing alpha-L-arabinofuranoside residues in alpha-L-arabinosides.. Functionally, involved in the hydrolysis of arabinan. Can hydrolyze (1,3)-alpha-, (1,2)-alpha-linked side group residues and non-reducing terminal L-arabinofuranose residues of debranched (1,5)-alpha-L-arabinan backbone. Also acts as a beta-D-xylosidase, releasing D-xylose from arabinoxylan and xylan. The sequence is that of Beta-D-xylosidase 3 (BXL3) from Arabidopsis thaliana (Mouse-ear cress).